The chain runs to 296 residues: Cyclin-dependent kinase 1 (296 aa).

The Protein kinase domain occupies 10 to 288 (YQKLEKLGEG…AKEALLHPYF (279 aa)). ATP-binding positions include 16–24 (LGEGTYGKV) and lysine 39. Threonine 20 carries the post-translational modification Phosphothreonine. Tyrosine 21 is subject to Phosphotyrosine. Aspartate 129 serves as the catalytic Proton acceptor. Threonine 162 is modified (phosphothreonine; by CAK).

The protein belongs to the protein kinase superfamily. CMGC Ser/Thr protein kinase family. CDC2/CDKX subfamily. As to quaternary structure, forms a stable but non-covalent complex with a regulatory subunit and with a cyclin.

The enzyme catalyses L-seryl-[protein] + ATP = O-phospho-L-seryl-[protein] + ADP + H(+). It carries out the reaction L-threonyl-[protein] + ATP = O-phospho-L-threonyl-[protein] + ADP + H(+). The catalysed reaction is [DNA-directed RNA polymerase] + ATP = phospho-[DNA-directed RNA polymerase] + ADP + H(+). With respect to regulation, phosphorylation at Thr-20 or Tyr-21 inactivates the enzyme, while phosphorylation at Thr-162 activates it. Functionally, plays a key role in the control of the eukaryotic cell cycle. Required for entry into S-phase and mitosis. p34 is a component of the kinase complex that phosphorylates the repetitive C-terminus of RNA polymerase II. This is Cyclin-dependent kinase 1 (cdk1) from Dictyostelium discoideum (Social amoeba).